The following is a 237-amino-acid chain: Phosphoribosylaminoimidazole-succinocarboxamide synthase (237 aa).

It belongs to the SAICAR synthetase family.

It carries out the reaction 5-amino-1-(5-phospho-D-ribosyl)imidazole-4-carboxylate + L-aspartate + ATP = (2S)-2-[5-amino-1-(5-phospho-beta-D-ribosyl)imidazole-4-carboxamido]succinate + ADP + phosphate + 2 H(+). It participates in purine metabolism; IMP biosynthesis via de novo pathway; 5-amino-1-(5-phospho-D-ribosyl)imidazole-4-carboxamide from 5-amino-1-(5-phospho-D-ribosyl)imidazole-4-carboxylate: step 1/2. This Marinobacter nauticus (strain ATCC 700491 / DSM 11845 / VT8) (Marinobacter aquaeolei) protein is Phosphoribosylaminoimidazole-succinocarboxamide synthase.